The following is a 163-amino-acid chain: Developmental pluripotency-associated protein 3 (163 aa).

In terms of tissue distribution, preferentially expressed in oocyte.

The protein resides in the nucleus. The protein localises to the cytoplasm. Functionally, primordial germ cell (PGCs)-specific protein involved in epigenetic chromatin reprogramming in the zygote following fertilization. In zygotes, DNA demethylation occurs selectively in the paternal pronucleus before the first cell division, while the adjacent maternal pronucleus and certain paternally-imprinted loci are protected from this process. Participates in protection of DNA methylation in the maternal pronucleus by preventing conversion of 5mC to 5hmC: specifically recognizes and binds histone H3 dimethylated at 'Lys-9' (H3K9me2) on maternal genome, and protects maternal genome from TET3-mediated conversion to 5hmC and subsequent DNA demethylation. Does not bind paternal chromatin, which is mainly packed into protamine and does not contain much H3K9me2 mark. Also protects imprinted loci that are marked with H3K9me2 in mature sperm from DNA demethylation in early embryogenesis. May be important for the totipotent/pluripotent states continuing through preimplantation development. Also involved in chromatin condensation in oocytogenesis. This chain is Developmental pluripotency-associated protein 3 (DPPA3), found in Bos taurus (Bovine).